The primary structure comprises 615 residues: Dihydroxy-acid dehydratase (615 aa).

Asp-81 is a binding site for Mg(2+). Residue Cys-122 coordinates [2Fe-2S] cluster. 2 residues coordinate Mg(2+): Asp-123 and Lys-124. N6-carboxylysine is present on Lys-124. Position 197 (Cys-197) interacts with [2Fe-2S] cluster. Residue Glu-494 coordinates Mg(2+). The active-site Proton acceptor is the Ser-520.

The protein belongs to the IlvD/Edd family. Homodimer. [2Fe-2S] cluster is required as a cofactor. It depends on Mg(2+) as a cofactor.

The catalysed reaction is (2R)-2,3-dihydroxy-3-methylbutanoate = 3-methyl-2-oxobutanoate + H2O. It carries out the reaction (2R,3R)-2,3-dihydroxy-3-methylpentanoate = (S)-3-methyl-2-oxopentanoate + H2O. It functions in the pathway amino-acid biosynthesis; L-isoleucine biosynthesis; L-isoleucine from 2-oxobutanoate: step 3/4. It participates in amino-acid biosynthesis; L-valine biosynthesis; L-valine from pyruvate: step 3/4. Functionally, functions in the biosynthesis of branched-chain amino acids. Catalyzes the dehydration of (2R,3R)-2,3-dihydroxy-3-methylpentanoate (2,3-dihydroxy-3-methylvalerate) into 2-oxo-3-methylpentanoate (2-oxo-3-methylvalerate) and of (2R)-2,3-dihydroxy-3-methylbutanoate (2,3-dihydroxyisovalerate) into 2-oxo-3-methylbutanoate (2-oxoisovalerate), the penultimate precursor to L-isoleucine and L-valine, respectively. The polypeptide is Dihydroxy-acid dehydratase (Salinispora arenicola (strain CNS-205)).